Consider the following 740-residue polypeptide: Folic acid synthesis protein fol1 (740 aa).

2 DHNA regions span residues 39-160 and 161-280; these read DLIH…REID and DQFF…SCFS. Positions 291–449 are HPPK; sequence IDNEAVYISL…EKIVDHDIKP (159 aa). The region spanning 471-730 is the Pterin-binding domain; the sequence is TYIMAILNLT…DVYEMYKISK (260 aa). The segment at 473–740 is DHPS; it reads IMAILNLTPD…MSDAIWKEIY (268 aa). Residue Asn478 participates in Mg(2+) binding. (7,8-dihydropterin-6-yl)methyl diphosphate-binding positions include Thr517, Asp552, Asn571, Asp643, Lys683, and 718–720; that span reads RVH.

It in the N-terminal section; belongs to the DHNA family. This sequence in the central section; belongs to the HPPK family. The protein in the C-terminal section; belongs to the DHPS family. Requires Mg(2+) as cofactor.

It carries out the reaction 7,8-dihydroneopterin = 6-hydroxymethyl-7,8-dihydropterin + glycolaldehyde. The catalysed reaction is 6-hydroxymethyl-7,8-dihydropterin + ATP = (7,8-dihydropterin-6-yl)methyl diphosphate + AMP + H(+). The enzyme catalyses (7,8-dihydropterin-6-yl)methyl diphosphate + 4-aminobenzoate = 7,8-dihydropteroate + diphosphate. Its pathway is cofactor biosynthesis; tetrahydrofolate biosynthesis; 2-amino-4-hydroxy-6-hydroxymethyl-7,8-dihydropteridine diphosphate from 7,8-dihydroneopterin triphosphate: step 3/4. It participates in cofactor biosynthesis; tetrahydrofolate biosynthesis; 2-amino-4-hydroxy-6-hydroxymethyl-7,8-dihydropteridine diphosphate from 7,8-dihydroneopterin triphosphate: step 4/4. The protein operates within cofactor biosynthesis; tetrahydrofolate biosynthesis; 7,8-dihydrofolate from 2-amino-4-hydroxy-6-hydroxymethyl-7,8-dihydropteridine diphosphate and 4-aminobenzoate: step 1/2. Catalyzes three sequential steps of tetrahydrofolate biosynthesis. This Pneumocystis carinii protein is Folic acid synthesis protein fol1 (fol1).